The following is a 197-amino-acid chain: Protein RESISTANCE TO PHYTOPHTHORA 1, chloroplastic (197 aa).

A chloroplast-targeting transit peptide spans 1-52 (MSWSLCSTHGVSSSIALTYGFRHRRRSTFRIFATSDGLEPKDDPPESPLPSS). A disordered region spans residues 35–56 (SDGLEPKDDPPESPLPSSSSAL). Helical transmembrane passes span 93–113 (FEVQ…NLLF), 120–140 (LWRL…LRAR), 150–170 (LNYL…FWKS), and 173–193 (LVWS…LGWL).

It localises to the plastid. The protein resides in the chloroplast. Its subcellular location is the membrane. Its function is as follows. Plays a positive role in the immune response to the oomycetes P.brassicae, including induced oxidative burst (e.g. H(2)O(2)) and enhanced expression of defense-related genes. This is Protein RESISTANCE TO PHYTOPHTHORA 1, chloroplastic from Arabidopsis thaliana (Mouse-ear cress).